Here is a 514-residue protein sequence, read N- to C-terminus: Maturase K (514 aa).

This sequence belongs to the intron maturase 2 family. MatK subfamily.

The protein resides in the plastid. The protein localises to the chloroplast. Functionally, usually encoded in the trnK tRNA gene intron. Probably assists in splicing its own and other chloroplast group II introns. The sequence is that of Maturase K from Encephalartos altensteinii (Altenstein's bread tree).